A 396-amino-acid chain; its full sequence is Cysteine protease ATG4A (396 aa).

Cys77 serves as the catalytic Nucleophile. Residues Asp276 and His278 contribute to the active site. The short motif at 390-393 (FEIL) is the LIR element.

Belongs to the peptidase C54 family. Interacts with ATG9A; the interaction is direct.

The protein resides in the cytoplasm. The enzyme catalyses [protein]-C-terminal L-amino acid-glycyl-phosphatidylethanolamide + H2O = [protein]-C-terminal L-amino acid-glycine + a 1,2-diacyl-sn-glycero-3-phosphoethanolamine. With respect to regulation, inhibited by N-ethylmaleimide. Redox-regulated during autophagy since reducing conditions activate ATG4A whereas an oxidizing environment such as the presence of H(2)O(2) inhibits its activity. Its function is as follows. Cysteine protease that plays a key role in autophagy by mediating both proteolytic activation and delipidation of ATG8 family proteins. The protease activity is required for proteolytic activation of ATG8 family proteins: cleaves the C-terminal amino acid of ATG8 proteins to reveal a C-terminal glycine. Exposure of the glycine at the C-terminus is essential for ATG8 proteins conjugation to phosphatidylethanolamine (PE) and insertion to membranes, which is necessary for autophagy. Preferred substrate is GABARAPL2 followed by MAP1LC3A and GABARAP. Protease activity is also required to counteract formation of high-molecular weight conjugates of ATG8 proteins (ATG8ylation): acts as a deubiquitinating-like enzyme that removes ATG8 conjugated to other proteins, such as ATG3. In addition to the protease activity, also mediates delipidation of ATG8 family proteins. Catalyzes delipidation of PE-conjugated forms of ATG8 proteins during macroautophagy. Compared to ATG4B, the major protein for proteolytic activation of ATG8 proteins, shows weaker ability to cleave the C-terminal amino acid of ATG8 proteins, while it displays stronger delipidation activity. Involved in phagophore growth during mitophagy independently of its protease activity and of ATG8 proteins: acts by regulating ATG9A trafficking to mitochondria and promoting phagophore-endoplasmic reticulum contacts during the lipid transfer phase of mitophagy. The chain is Cysteine protease ATG4A from Mus musculus (Mouse).